Consider the following 577-residue polypeptide: Aspartate--tRNA(Asp/Asn) ligase (577 aa).

Residue E171 participates in L-aspartate binding. Positions 195-198 (QLFK) are aspartate. Residue R217 participates in L-aspartate binding. Residues 217-219 (RDE) and Q226 each bind ATP. H444 is an L-aspartate binding site. Residue E474 coordinates ATP. R481 lines the L-aspartate pocket. Position 526–529 (526–529 (GFDR)) interacts with ATP.

The protein belongs to the class-II aminoacyl-tRNA synthetase family. Type 1 subfamily. In terms of assembly, homodimer.

The protein localises to the cytoplasm. The catalysed reaction is tRNA(Asx) + L-aspartate + ATP = L-aspartyl-tRNA(Asx) + AMP + diphosphate. Aspartyl-tRNA synthetase with relaxed tRNA specificity since it is able to aspartylate not only its cognate tRNA(Asp) but also tRNA(Asn). Reaction proceeds in two steps: L-aspartate is first activated by ATP to form Asp-AMP and then transferred to the acceptor end of tRNA(Asp/Asn). The polypeptide is Aspartate--tRNA(Asp/Asn) ligase (Helicobacter pylori (strain P12)).